Reading from the N-terminus, the 514-residue chain is Variant surface glycoprotein ILTAT 1.24 (514 aa).

An N-terminal signal peptide occupies residues 1–23 (MVYRNILQLSVLKVLLIVLIVEA). Disulfide bonds link Cys-37–Cys-162 and Cys-143–Cys-204. Asn-443 is a glycosylation site (N-linked (GlcNAc...) asparagine). A disordered region spans residues 451 to 476 (GVPVTQTQTAGADTTAEKCKGKGEKD). Residues 455 to 464 (TQTQTAGADT) are compositionally biased toward low complexity. The span at 465-476 (TAEKCKGKGEKD) shows a compositional bias: basic and acidic residues. A lipid anchor (GPI-anchor amidated aspartate) is attached at Asp-491. Positions 492-514 (SSILANKQFALSVASAAFVALLF) are cleaved as a propeptide — removed in mature form.

The protein resides in the cell membrane. VSG forms a coat on the surface of the parasite. The trypanosome evades the immune response of the host by expressing a series of antigenically distinct VSGs from an estimated 1000 VSG genes. In Trypanosoma brucei brucei, this protein is Variant surface glycoprotein ILTAT 1.24.